A 786-amino-acid chain; its full sequence is ATP-dependent RNA helicase SUPV3L1, mitochondrial (786 aa).

A mitochondrion-targeting transit peptide spans 1–22 (MSFSRALLWARLPAGRQAGHRA). Lys99 is modified (N6-acetyllysine). Residues 194-334 (DARAMQRKII…AIDLVMELMY (141 aa)) enclose the Helicase ATP-binding domain. 207–214 (GPTNSGKT) provides a ligand contact to ATP. An N6-acetyllysine modification is found at Lys220. The Helicase C-terminal domain maps to 353–518 (VLDHALESLD…GLHPTAEQIE (166 aa)). The interval 650-786 (PDASLIRDLQ…RRKKKEPDSD (137 aa)) is interaction with LAMTOR5, important for protein stability. 2 disordered regions span residues 690 to 730 (GFPS…DAGE) and 749 to 786 (KQLE…PDSD). The segment covering 693–705 (SGSQSRLSGTLKS) has biased composition (polar residues). Ser725 carries the post-translational modification Phosphoserine. Over residues 749-771 (KQLEKEWMTQQTEHNKEKTESGT) the composition is skewed to basic and acidic residues.

Belongs to the helicase family. As to quaternary structure, homodimer; in free form. Component of the mitochondrial degradosome (mtEXO) complex which is a heteropentamer containing 2 copies of SUPV3L1 and 3 copies of PNPT1. As part of mitochondrial degradosome complex, interacts with GRSF1 in a RNA-dependent manner; the interaction enhances the activity of the complex. Interacts with LAMTOR5/HBXIP, WRN and BLM. It depends on Mg(2+) as a cofactor. Mn(2+) serves as cofactor. Broadly expressed.

The protein resides in the nucleus. It is found in the mitochondrion matrix. It localises to the mitochondrion nucleoid. It catalyses the reaction ATP + H2O = ADP + phosphate + H(+). With respect to regulation, helicase activity toward DNA substrate is inhibited by micromolar concentrations of 5,6-dichloro-1-(beta-D-ribofuranosyl)benzotriazole (DRBT) and 4,5,6,7-tetrabromobenzotriazole (TBBT). Helicase activity toward RNA substrate is inhibited by elevated concentrations of TBBT. Inhibited by some ring-expanded nucleoside analogs. Major helicase player in mitochondrial RNA metabolism. Component of the mitochondrial degradosome (mtEXO) complex, that degrades 3' overhang double-stranded RNA with a 3'-to-5' directionality in an ATP-dependent manner. Involved in the degradation of non-coding mitochondrial transcripts (MT-ncRNA) and tRNA-like molecules. ATPase and ATP-dependent multisubstrate helicase, able to unwind double-stranded (ds) DNA and RNA, and RNA/DNA heteroduplexes in the 5'-to-3' direction. Plays a role in the RNA surveillance system in mitochondria; regulates the stability of mature mRNAs, the removal of aberrantly formed mRNAs and the rapid degradation of non coding processing intermediates. Also implicated in recombination and chromatin maintenance pathways. May protect cells from apoptosis. Associates with mitochondrial DNA. The protein is ATP-dependent RNA helicase SUPV3L1, mitochondrial (SUPV3L1) of Homo sapiens (Human).